The following is a 221-amino-acid chain: MALPSVTALQVENVAFPPTLIKPPASANTLFLGGAGERGLHIQDKFVKFTAIGIYLQDTAVPSLAVKWKGKPVDELTESVQFFRDIVTGPFEKFMQVTMILPLTGQQYSEKVSENCVAIWKHLGIYTDEEGKAIDKFVSVFKDQTFPPGSSILFTVLPKGSLAISFSKDGSIPEVESAVIDNKLLSEAVLESMIGAHGVSPAAKQSLASRLSELFKHHAEV.

Residues Thr50, Asn115, and Ser192 each contribute to the substrate site.

It belongs to the chalcone isomerase family.

It carries out the reaction a chalcone = a flavanone.. The protein operates within secondary metabolite biosynthesis; flavonoid biosynthesis. Its function is as follows. Catalyzes the intramolecular cyclization of bicyclic chalcones into tricyclic (S)-flavanones. Responsible for the isomerization of 4,2',4',6'-tetrahydroxychalcone (also termed chalcone) into naringenin. The polypeptide is Chalcone--flavanone isomerase 2 (CHI2) (Lotus japonicus (Lotus corniculatus var. japonicus)).